Here is a 253-residue protein sequence, read N- to C-terminus: Methionine aminopeptidase A (253 aa).

Residue H80 participates in substrate binding. A divalent metal cation contacts are provided by D98, D109, and H172. Position 179 (H179) interacts with substrate. 2 residues coordinate a divalent metal cation: E205 and E236.

This sequence belongs to the peptidase M24A family. Methionine aminopeptidase type 1 subfamily. In terms of assembly, monomer. Co(2+) serves as cofactor. It depends on Zn(2+) as a cofactor. Mn(2+) is required as a cofactor. The cofactor is Fe(2+).

It catalyses the reaction Release of N-terminal amino acids, preferentially methionine, from peptides and arylamides.. Its function is as follows. Removes the N-terminal methionine from nascent proteins. The N-terminal methionine is often cleaved when the second residue in the primary sequence is small and uncharged (Met-Ala-, Cys, Gly, Pro, Ser, Thr, or Val). Requires deformylation of the N(alpha)-formylated initiator methionine before it can be hydrolyzed. This chain is Methionine aminopeptidase A, found in Synechocystis sp. (strain ATCC 27184 / PCC 6803 / Kazusa).